Reading from the N-terminus, the 924-residue chain is 104 kDa microneme/rhoptry antigen (924 aa).

An N-terminal signal peptide occupies residues 1-19 (MKFLILLFNILCLFPVLAA). A disordered region spans residues 490-907 (SKKKLAPITE…KKPKKPDSAY (418 aa)). 2 stretches are compositionally biased toward basic and acidic residues: residues 522-532 (PGDKEGSEGHK) and 573-588 (GPKD…EPRK). The segment covering 592–617 (PRTASPTRRPSPKLPQLSKLPKSTSP) has biased composition (low complexity). The span at 653–673 (SFKEKFYDDYSKAASRSKETK) shows a compositional bias: basic and acidic residues. The span at 724–736 (SPSTSPSEFFTPP) shows a compositional bias: low complexity. Composition is skewed to basic and acidic residues over residues 737–747 (ESKRTRFHETP), 770–783 (KSPD…RSPS), and 816–825 (DPGRMAKDAS). The segment covering 857–867 (DDEGTEADDEE) has biased composition (acidic residues). Over residues 868–878 (THPPEERQKTE) the composition is skewed to basic and acidic residues. Over residues 879–901 (VRRRRPPKKPSKSPRPSKPKKPK) the composition is skewed to basic residues. D904 carries the GPI-anchor amidated aspartate lipid modification. Residues 905-924 (SAYIPSILAILVVSLIVGIL) constitute a propeptide, removed in mature form.

The protein localises to the cell membrane. The chain is 104 kDa microneme/rhoptry antigen from Theileria parva (East coast fever infection agent).